Here is a 914-residue protein sequence, read N- to C-terminus: Transcription factor AZF1 (914 aa).

Disordered stretches follow at residues 1–63, 93–124, and 138–275; these read MPPP…ESIS, STGGPSSGGAYSNLPRLSTSSTHQPPDLSQIG, and QQLQ…NSNQ. The span at 13-34 shows a compositional bias: polar residues; that stretch reads QAGQNESQNQSSGEAGEQNQEH. The segment covering 44-56 has biased composition (low complexity); sequence QSQPASSQPQHQQ. At Ser-61 the chain carries Phosphoserine. Polar residues predominate over residues 107–116; it reads PRLSTSSTHQ. A polyglutamine domain region spans residues 136 to 158; it reads QQQQLQNQHRQQQQQQQQQSHQQ. A compositionally biased stretch (low complexity) spans 138 to 158; that stretch reads QQLQNQHRQQQQQQQQQSHQQ. Positions 164–194 are enriched in polar residues; it reads PSFSTGLTGSSSQYQFLPRNDNTSQPPSKRN. Low complexity-rich tracts occupy residues 206 to 222 and 245 to 275; these read FEFFSMQQSQQPQFQPS and SNGTNNSGNMNTNADYESFFNTGTNNSNSNQ. Residues Ser-286 and Ser-325 each carry the phosphoserine modification. The disordered stretch occupies residues 326 to 415; it reads LSVNNKANGD…STDTTSNSRK (90 aa). The span at 359 to 390 shows a compositional bias: low complexity; sequence DSSNNNNNNNNNNNNENNNDNNNDNNDNSINS. The polyasparagine domain stretch occupies residues 362-386; sequence NNNNNNNNNNNNENNNDNNNDNNDN. Over residues 391–412 the composition is skewed to polar residues; that stretch reads ATSTNIPNQEDHSLASTDTTSN. 4 consecutive C2H2-type zinc fingers follow at residues 593 to 615, 621 to 643, 649 to 671, and 677 to 702; these read HECPYCHRLFSQATHLEVHVRSH, FVCDYCGKRFTQGGNLRTHERLH, YSCDICDKKFSRKGNLAAHLVTH, and FVCKLENCNKTFTQLGNMKAHQNRFH. Disordered stretches follow at residues 743–812 and 853–877; these read GIKG…SPTQ and RLGSSSSSNTNNNNSNFSVGAAPGV. Positions 754-770 are enriched in polar residues; sequence KKSTISSPENHPASTIL. 3 stretches are compositionally biased toward low complexity: residues 771-782, 796-809, and 856-868; these read NPNTNANNAIAN, SSSNSNPGSHSMIS, and SSSSSNTNNNNSN.

The protein localises to the nucleus. It localises to the cytoplasm. The protein resides in the cytosol. In terms of biological role, transcription factor involved in the diauxic shift. In the presence of glucose, activates carbon and energy metabolism genes, and in te presence of glycerol-lactate, activates genes needed for cell wall maintenance. Binds to DNA elements with the sequence AAAAGAAA (A4GA3), a motif enriched in the promoters of AZF1-sensitive genes. Required for glucose induction of CLN3 transcription. Also required for proper FLO11 expression. May also function as a corepressor. Its function is as follows. As an intrinsically disordered protein, AZF1 is capable of forming the prion [AZF1+] that confers resistance to the drug radicicol in a gain-of-function manner but decreases the expression of AZF1's target genes. In Saccharomyces cerevisiae (strain ATCC 204508 / S288c) (Baker's yeast), this protein is Transcription factor AZF1.